A 148-amino-acid chain; its full sequence is Small ribosomal subunit protein eS6 (148 aa).

The protein belongs to the eukaryotic ribosomal protein eS6 family.

The sequence is that of Small ribosomal subunit protein eS6 from Pyrobaculum arsenaticum (strain DSM 13514 / JCM 11321 / PZ6).